Reading from the N-terminus, the 416-residue chain is Hepatic and glial cell adhesion molecule (416 aa).

The first 33 residues, 1–33 (MKRERGALSRASRALRLAPFVYLLLIQTDPLEG), serve as a signal peptide directing secretion. In terms of domain architecture, Ig-like V-type spans 34-142 (VNITSPVRLI…GEKTINLTVD (109 aa)). Over 34–240 (VNITSPVRLI…VKITVYRRSS (207 aa)) the chain is Extracellular. Residues Asn-35, Asn-138, Asn-167, and Asn-189 are each glycosylated (N-linked (GlcNAc...) asparagine). Positions 148–234 (PQVLVASTTV…QGRSLPVKIT (87 aa)) constitute an Ig-like C2-type domain. An intrachain disulfide couples Cys-168 to Cys-217. A helical membrane pass occupies residues 241-261 (LYIILSTGGIFLLVTLVTVCA). Residues 262 to 416 (CWKPSKRKQK…DEAGPVEISA (155 aa)) are Cytoplasmic-facing. The segment at 273–416 (LEKQNSLEYM…DEAGPVEISA (144 aa)) is disordered. Ser-278 carries the post-translational modification Phosphoserine. The segment covering 285–306 (NDDRLKPEADTLPRSGEQERKN) has biased composition (basic and acidic residues). 2 positions are modified to phosphoserine: Ser-350 and Ser-377. Over residues 383–398 (SSPGRSRSASRTLRTA) the composition is skewed to low complexity.

As to quaternary structure, homodimer. Dimer formation occurs predominantly through cis interactions on the cell surface. Part of a complex containing MLC1, TRPV4, AQP4 and ATP1B1. Interacts with CLCN2. N-glycosylated.

The protein resides in the cytoplasm. It is found in the cell membrane. Involved in regulating cell motility and cell-matrix interactions. May inhibit cell growth through suppression of cell proliferation. In glia, associates and targets CLCN2 at astrocytic processes and myelinated fiber tracts where it may regulate transcellular chloride flux involved in neuron excitability. The protein is Hepatic and glial cell adhesion molecule of Homo sapiens (Human).